The sequence spans 737 residues: DNA polymerase iota (737 aa).

One can recognise a UmuC domain in the interval Ile-17–Gly-231. Asp-21 serves as a coordination point for Mg(2+). A 2'-deoxyribonucleoside 5'-triphosphate is bound by residues Tyr-26 and Arg-58. Asp-113 is a binding site for Mg(2+). Residue Glu-114 is part of the active site. DNA-binding stretches follow at residues Thr-212–Asp-277 and Lys-288–Gln-413. Disordered regions lie at residues Thr-443–Pro-464, Ser-482–Lys-515, Asp-557–Thr-581, and Leu-607–Thr-643. A compositionally biased stretch (polar residues) spans Gly-491–Ser-502. Composition is skewed to low complexity over residues Pro-563–Pro-577, Leu-607–Pro-618, and Pro-632–Thr-643. The Ubiquitin-binding (UBM) signature appears at Val-669–Ile-686.

It belongs to the DNA polymerase type-Y family. Mg(2+) serves as cofactor. Requires Mn(2+) as cofactor.

It localises to the nucleus. It carries out the reaction DNA(n) + a 2'-deoxyribonucleoside 5'-triphosphate = DNA(n+1) + diphosphate. In terms of biological role, error-prone DNA polymerase specifically involved in DNA repair. Plays an important role in translesion synthesis, where the normal high-fidelity DNA polymerases cannot proceed and DNA synthesis stalls. Favors Hoogsteen base-pairing in the active site. Inserts the correct base with higher fidelity opposite an adenosine template. Exhibits low fidelity and efficiency opposite a thymidine template, where it will preferentially insert guanosine. Forms a Schiff base with 5'-deoxyribose phosphate at abasic sites, but may not have lyase activity. This is DNA polymerase iota from Drosophila melanogaster (Fruit fly).